Here is a 124-residue protein sequence, read N- to C-terminus: Small ribosomal subunit protein uS12 (124 aa).

Asp89 bears the 3-methylthioaspartic acid mark. Residues 104 to 124 (ALGVEDRKRGRSKYGAKRPKA) are disordered. The span at 112–124 (RGRSKYGAKRPKA) shows a compositional bias: basic residues.

It belongs to the universal ribosomal protein uS12 family. Part of the 30S ribosomal subunit. Contacts proteins S8 and S17. May interact with IF1 in the 30S initiation complex.

Its function is as follows. With S4 and S5 plays an important role in translational accuracy. Functionally, interacts with and stabilizes bases of the 16S rRNA that are involved in tRNA selection in the A site and with the mRNA backbone. Located at the interface of the 30S and 50S subunits, it traverses the body of the 30S subunit contacting proteins on the other side and probably holding the rRNA structure together. The combined cluster of proteins S8, S12 and S17 appears to hold together the shoulder and platform of the 30S subunit. In Treponema denticola (strain ATCC 35405 / DSM 14222 / CIP 103919 / JCM 8153 / KCTC 15104), this protein is Small ribosomal subunit protein uS12.